A 304-amino-acid chain; its full sequence is Nod factor export ATP-binding protein I (304 aa).

An ABC transporter domain is found at 6-236 (IDFRNVEKRF…EIGCDVIEIY (231 aa)). 38–45 (GPNGAGKT) contributes to the ATP binding site.

This sequence belongs to the ABC transporter superfamily. Lipooligosaccharide exporter (TC 3.A.1.102) family. In terms of assembly, the complex is composed of two ATP-binding proteins (NodI) and two transmembrane proteins (NodJ).

It is found in the cell inner membrane. Part of the ABC transporter complex NodIJ involved in the export of the nodulation factors (Nod factors), the bacterial signal molecules that induce symbiosis and subsequent nodulation induction. Nod factors are LCO (lipo-chitin oligosaccharide), a modified beta-1,4-linked N-acetylglucosamine oligosaccharide. This subunit is responsible for energy coupling to the transport system. In Burkholderia lata (strain ATCC 17760 / DSM 23089 / LMG 22485 / NCIMB 9086 / R18194 / 383), this protein is Nod factor export ATP-binding protein I.